The sequence spans 198 residues: HTH-type transcriptional regulator BetI (198 aa).

Residues 8–68 (KIRRPQLVSA…ETMRDILRQL (61 aa)) form the HTH tetR-type domain. Residues 31-50 (SVSLISQEAGVSSGIINHYF) constitute a DNA-binding region (H-T-H motif).

It participates in amine and polyamine biosynthesis; betaine biosynthesis via choline pathway [regulation]. In terms of biological role, repressor involved in the biosynthesis of the osmoprotectant glycine betaine. It represses transcription of the choline transporter BetT and the genes of BetAB involved in the synthesis of glycine betaine. The sequence is that of HTH-type transcriptional regulator BetI from Vibrio vulnificus (strain YJ016).